Consider the following 172-residue polypeptide: Glutamyl-tRNA(Gln) amidotransferase subunit C-4, mitochondrial (172 aa).

The transit peptide at 1–23 (MIRIPFHLRQTPGRTLHSLVRSF) directs the protein to the mitochondrion. Positions 51–73 (PSKVPQRPHKSTIDGQSTPTRIP) are disordered.

It belongs to the GatC family. Subunit of the heterotrimeric GatCAB amidotransferase (AdT) complex, composed of A, B and C subunits.

The protein localises to the mitochondrion. The catalysed reaction is L-glutamyl-tRNA(Gln) + L-glutamine + ATP + H2O = L-glutaminyl-tRNA(Gln) + L-glutamate + ADP + phosphate + H(+). In terms of biological role, allows the formation of correctly charged Gln-tRNA(Gln) through the transamidation of misacylated Glu-tRNA(Gln) in the mitochondria. The reaction takes place in the presence of glutamine and ATP through an activated gamma-phospho-Glu-tRNA(Gln). In Culex quinquefasciatus (Southern house mosquito), this protein is Glutamyl-tRNA(Gln) amidotransferase subunit C-4, mitochondrial.